The sequence spans 584 residues: 65 kDa membrane protein (584 aa).

Residues 1-30 form the signal peptide; sequence MKFKSLITTTLALGVLASTGANFNNNEASA. MAP repeat units lie at residues 45-154, 156-265, 266-374, 375-474, and 475-584; these read GYSK…EDKK, DKAN…ENKA, KRNY…KADR, YVPY…TGTK, and AKAD…KKNK.

The protein localises to the cell membrane. Binds various plasma and ECM-proteins. The sequence is that of 65 kDa membrane protein from Staphylococcus aureus (strain Newman).